Here is a 177-residue protein sequence, read N- to C-terminus: Adenine phosphoribosyltransferase (177 aa).

This sequence belongs to the purine/pyrimidine phosphoribosyltransferase family. Homodimer.

Its subcellular location is the cytoplasm. The catalysed reaction is AMP + diphosphate = 5-phospho-alpha-D-ribose 1-diphosphate + adenine. The protein operates within purine metabolism; AMP biosynthesis via salvage pathway; AMP from adenine: step 1/1. In terms of biological role, catalyzes a salvage reaction resulting in the formation of AMP, that is energically less costly than de novo synthesis. The chain is Adenine phosphoribosyltransferase from Idiomarina loihiensis (strain ATCC BAA-735 / DSM 15497 / L2-TR).